A 472-amino-acid chain; its full sequence is Argininosuccinate lyase (472 aa).

This sequence belongs to the lyase 1 family. Argininosuccinate lyase subfamily.

The protein localises to the cytoplasm. It catalyses the reaction 2-(N(omega)-L-arginino)succinate = fumarate + L-arginine. Its pathway is amino-acid biosynthesis; L-arginine biosynthesis; L-arginine from L-ornithine and carbamoyl phosphate: step 3/3. In Mycobacterium avium (strain 104), this protein is Argininosuccinate lyase.